We begin with the raw amino-acid sequence, 141 residues long: ATP synthase F(0) complex subunit C3, mitochondrial (141 aa).

The N-terminal 66 residues, 1 to 66, are a transit peptide targeting the mitochondrion; it reads MFACAKLART…REFQTSVISR (66 aa). A helical membrane pass occupies residues 82-102; sequence VGVAGSGAGIGTVFGSLIIGY. K109 carries the post-translational modification N6,N6,N6-trimethyllysine. A helical membrane pass occupies residues 117–137; the sequence is ILGFALSEAMGLFCLMVAFLI.

It belongs to the ATPase C chain family. F-type ATPases have 2 components, CF(1) - the catalytic core - and CF(0) - the membrane proton channel. CF(1) has five subunits: alpha(3), beta(3), gamma(1), delta(1), epsilon(1). CF(0) has three main subunits: a, b and c. Interacts with TMEM70 and TMEM242. In terms of processing, trimethylated by ATPSCKMT at Lys-109. Methylation is required for proper incorporation of the C subunit into the ATP synthase complex and mitochondrial respiration.

The protein resides in the mitochondrion membrane. Mitochondrial membrane ATP synthase (F(1)F(0) ATP synthase or Complex V) produces ATP from ADP in the presence of a proton gradient across the membrane which is generated by electron transport complexes of the respiratory chain. F-type ATPases consist of two structural domains, F(1) - containing the extramembraneous catalytic core and F(0) - containing the membrane proton channel, linked together by a central stalk and a peripheral stalk. During catalysis, ATP synthesis in the catalytic domain of F(1) is coupled via a rotary mechanism of the central stalk subunits to proton translocation. Part of the complex F(0) domain. A homomeric c-ring of probably 10 subunits is part of the complex rotary element. This chain is ATP synthase F(0) complex subunit C3, mitochondrial, found in Mus musculus (Mouse).